Reading from the N-terminus, the 119-residue chain is Ribonuclease P protein component (119 aa).

It belongs to the RnpA family. In terms of assembly, consists of a catalytic RNA component (M1 or rnpB) and a protein subunit.

It catalyses the reaction Endonucleolytic cleavage of RNA, removing 5'-extranucleotides from tRNA precursor.. Functionally, RNaseP catalyzes the removal of the 5'-leader sequence from pre-tRNA to produce the mature 5'-terminus. It can also cleave other RNA substrates such as 4.5S RNA. The protein component plays an auxiliary but essential role in vivo by binding to the 5'-leader sequence and broadening the substrate specificity of the ribozyme. The chain is Ribonuclease P protein component from Streptococcus pyogenes serotype M12 (strain MGAS2096).